A 726-amino-acid polypeptide reads, in one-letter code: Catalase-peroxidase (726 aa).

The segment at residues 90–213 is a cross-link (tryptophyl-tyrosyl-methioninium (Trp-Tyr) (with M-239)); it reads WHAAGTYRIG…LAAVQMGLIY (124 aa). The active-site Proton acceptor is H91. The tryptophyl-tyrosyl-methioninium (Tyr-Met) (with W-90) cross-link spans 213 to 239; that stretch reads YVNPEGPNGNPDPLAAARDIRETFARM. H254 lines the heme b pocket. Residues 334–359 are disordered; sequence AHQWKPKHGAGANTVPDAHDPSKRHA.

It belongs to the peroxidase family. Peroxidase/catalase subfamily. As to quaternary structure, homodimer or homotetramer. The cofactor is heme b. Formation of the three residue Trp-Tyr-Met cross-link is important for the catalase, but not the peroxidase activity of the enzyme.

It catalyses the reaction H2O2 + AH2 = A + 2 H2O. It carries out the reaction 2 H2O2 = O2 + 2 H2O. In terms of biological role, bifunctional enzyme with both catalase and broad-spectrum peroxidase activity. The chain is Catalase-peroxidase from Bradyrhizobium sp. (strain BTAi1 / ATCC BAA-1182).